We begin with the raw amino-acid sequence, 488 residues long: Glutamyl-tRNA(Gln) amidotransferase subunit A (488 aa).

Catalysis depends on charge relay system residues Lys77 and Ser152. Ser176 functions as the Acyl-ester intermediate in the catalytic mechanism.

It belongs to the amidase family. GatA subfamily. In terms of assembly, heterotrimer of A, B and C subunits.

It catalyses the reaction L-glutamyl-tRNA(Gln) + L-glutamine + ATP + H2O = L-glutaminyl-tRNA(Gln) + L-glutamate + ADP + phosphate + H(+). Allows the formation of correctly charged Gln-tRNA(Gln) through the transamidation of misacylated Glu-tRNA(Gln) in organisms which lack glutaminyl-tRNA synthetase. The reaction takes place in the presence of glutamine and ATP through an activated gamma-phospho-Glu-tRNA(Gln). The polypeptide is Glutamyl-tRNA(Gln) amidotransferase subunit A (Streptococcus pyogenes serotype M28 (strain MGAS6180)).